Reading from the N-terminus, the 342-residue chain is Tetraacyldisaccharide 4'-kinase (342 aa).

68 to 75 (TVGGTGKT) contributes to the ATP binding site.

Belongs to the LpxK family.

The catalysed reaction is a lipid A disaccharide + ATP = a lipid IVA + ADP + H(+). It participates in glycolipid biosynthesis; lipid IV(A) biosynthesis; lipid IV(A) from (3R)-3-hydroxytetradecanoyl-[acyl-carrier-protein] and UDP-N-acetyl-alpha-D-glucosamine: step 6/6. In terms of biological role, transfers the gamma-phosphate of ATP to the 4'-position of a tetraacyldisaccharide 1-phosphate intermediate (termed DS-1-P) to form tetraacyldisaccharide 1,4'-bis-phosphate (lipid IVA). The protein is Tetraacyldisaccharide 4'-kinase of Burkholderia pseudomallei (strain K96243).